Reading from the N-terminus, the 429-residue chain is Glutamate-1-semialdehyde 2,1-aminomutase (429 aa).

Lys-267 carries the N6-(pyridoxal phosphate)lysine modification.

The protein belongs to the class-III pyridoxal-phosphate-dependent aminotransferase family. HemL subfamily. In terms of assembly, homodimer. Pyridoxal 5'-phosphate is required as a cofactor.

Its subcellular location is the cytoplasm. It catalyses the reaction (S)-4-amino-5-oxopentanoate = 5-aminolevulinate. The protein operates within porphyrin-containing compound metabolism; protoporphyrin-IX biosynthesis; 5-aminolevulinate from L-glutamyl-tRNA(Glu): step 2/2. The polypeptide is Glutamate-1-semialdehyde 2,1-aminomutase (Herpetosiphon aurantiacus (strain ATCC 23779 / DSM 785 / 114-95)).